Here is a 286-residue protein sequence, read N- to C-terminus: ATP synthase gamma chain (286 aa).

The protein belongs to the ATPase gamma chain family. In terms of assembly, F-type ATPases have 2 components, CF(1) - the catalytic core - and CF(0) - the membrane proton channel. CF(1) has five subunits: alpha(3), beta(3), gamma(1), delta(1), epsilon(1). CF(0) has three main subunits: a, b and c.

The protein localises to the cell inner membrane. Functionally, produces ATP from ADP in the presence of a proton gradient across the membrane. The gamma chain is believed to be important in regulating ATPase activity and the flow of protons through the CF(0) complex. The polypeptide is ATP synthase gamma chain (Pseudomonas savastanoi pv. phaseolicola (strain 1448A / Race 6) (Pseudomonas syringae pv. phaseolicola (strain 1448A / Race 6))).